The following is a 926-amino-acid chain: MLRVSRTKLGRLSPSLSRGLHHKAVMALRREDVNAWERRAPLAPRHVKGITNLGYKVLIQPSNRRAIHDKEYVKAGGILQEDISEACLILGVKRPPEEKLMPKKTYAFFSHTIKAQEANMGLLDEILKQEIRLIDYEKMVDHRGIRVVAFGQWAGVAGIINILHGMGLRLLALGHHTPFMHIGMAHNYRNSGQAVQAVRDAGYEISLGLMPKSIGPLTFVFTGTGNVSKGAQEIFNELPCEYVEPHELKEVSQNGDLRKVYGTVLSRHHHLVRKTDGVYDPVEYDKYPERYISRFNTDIAPYTTCLINGIYWEQNTPRLLTRQDAQSLLAPGKSPVAGVEGCPALPHKLVAICDISADTGGSIEFMTECTTIERPFCMYDADQHIIHDSVEGSGILMCSIDNLPAQLPIESTEYFGDMLYPYVEEMILSDATQPLESQNFSPVVRDAVIASNGMLSNKYKYIQKLRENREHAQSLSMGTKKKVLVLGSGYVSEPVLEYLLRDDSIEITVGSDMKNQIEQLGKKYNINPVSLHVGKQEEKLSSLVATQDLVISLLPYVLHPLVAKACIASKVNMITASYITPALKELEKSVEDAGITVIGELGLDPGLDHMLAMETIDKAKEVGATIESYVSYCGGLPAPECSDNPLRYKFSWSPVGVLMNIMQPATYLLNGKVVNAVGGVSFLDSVTPMDYFPGLNLEGYPNRDSTKYAEIYGIPSAHTLLRGTLRYKGYAKALSGFVKLGLINRDAFPALQPDANPLTWKELLCDLVGISSSSKCDVLKEAVFKKLGGDTTQLEALEWLGLLGDEQVPQAESLVDALSKHLAVKLSYGPGEKDMIVMRDSFGIRHPSGHLENKTIDLVVYGDVNGFSAMAKTVGLPTAMAAKMLLDGEIQAKGLMGPFSKEIYGPILERIKAEGIMYTTQSTIKL.

The N-terminal 27 residues, 1–27 (MLRVSRTKLGRLSPSLSRGLHHKAVMA), are a transit peptide targeting the mitochondrion. The tract at residues 28-455 (LRREDVNAWE…DAVIASNGML (428 aa)) is lysine-ketoglutarate reductase. Residues Lys48 and Lys56 each carry the N6-acetyllysine modification. Lys93 bears the N6-acetyllysine; alternate mark. Lys93 carries the N6-succinyllysine; alternate modification. Lys128 carries the post-translational modification N6-acetyllysine. Lys138 bears the N6-acetyllysine; alternate mark. The residue at position 138 (Lys138) is an N6-succinyllysine; alternate. Lys274 bears the N6-succinyllysine mark. The residue at position 286 (Lys286) is an N6-acetyllysine; alternate. Lys286 is modified (N6-succinyllysine; alternate). Lys333 bears the N6-succinyllysine mark. Lys458 is modified (N6-acetyllysine; alternate). Lys458 is subject to N6-succinyllysine; alternate. Positions 477 to 926 (MGTKKKVLVL…MYTTQSTIKL (450 aa)) are saccharopine dehydrogenase. The NAD(+) site is built by Ser488, Asp512, and Gln516. Lys523 and Lys535 each carry N6-acetyllysine; alternate. Lys523 and Lys535 each carry N6-succinyllysine; alternate. NAD(+) is bound by residues Leu554, Ala576, and Ser577. 577 to 578 (SY) lines the L-saccharopine pocket. At Lys584 the chain carries N6-acetyllysine; alternate. N6-succinyllysine; alternate is present on Lys584. Residues Leu603, Asp604, and Pro605 each coordinate NAD(+). Asp604 is a binding site for L-saccharopine. L-saccharopine is bound at residue Arg703. Lys707 carries the post-translational modification N6-acetyllysine. L-saccharopine is bound at residue 724–726 (TLR). N6-succinyllysine is present on Lys732. The residue at position 739 (Lys739) is an N6-acetyllysine. Lys761 carries the N6-acetyllysine; alternate modification. At Lys761 the chain carries N6-succinyllysine; alternate. At Lys780 the chain carries N6-acetyllysine.

This sequence in the N-terminal section; belongs to the AlaDH/PNT family. It in the C-terminal section; belongs to the saccharopine dehydrogenase family. Homotetramer.

Its subcellular location is the mitochondrion. It carries out the reaction L-saccharopine + NADP(+) + H2O = L-lysine + 2-oxoglutarate + NADPH + H(+). The enzyme catalyses L-saccharopine + NAD(+) + H2O = (S)-2-amino-6-oxohexanoate + L-glutamate + NADH + H(+). It functions in the pathway amino-acid degradation; L-lysine degradation via saccharopine pathway; glutaryl-CoA from L-lysine: step 1/6. The protein operates within amino-acid degradation; L-lysine degradation via saccharopine pathway; glutaryl-CoA from L-lysine: step 2/6. Its function is as follows. Bifunctional enzyme that catalyzes the first two steps in lysine degradation. The protein is Alpha-aminoadipic semialdehyde synthase, mitochondrial of Bos taurus (Bovine).